A 129-amino-acid polypeptide reads, in one-letter code: GEL complex subunit OPTI (129 aa).

The Cytoplasmic portion of the chain corresponds to 1–44 (MSGGRRKEEPPQPQLANGALKVSVWSKVLRSDAAWDDKDEFLDV). A helical transmembrane segment spans residues 45–65 (IYWFRQIIALVLGVIWGVLPL). Arg-66 is a topological domain (lumenal). Residues 67–84 (GFLGIAGFCLINAGVLYL) form a helical membrane-spanning segment. Topologically, residues 85–103 (YFSNYLQIDEEEYGGTWEL) are cytoplasmic. Residues 104 to 127 (TKEGFMTSFALFMVIWIIFYTAIH) form a helical membrane-spanning segment. The Lumenal portion of the chain corresponds to 128-129 (YD).

It belongs to the EMC6 family. As to quaternary structure, component of the GET- and EMC-like (GEL) complex, composed of RAB5IF/OPTI and TMCO1. The GEL complex is part of the multi-pass translocon (MPT) complex, composed of three subcomplexes, the GEL complex (composed of RAB5IF/OPTI and TMCO1), the BOS complex (composed of NCLN/Nicalin, NOMO1 and TMEM147) and the PAT complex (composed of WDR83OS/Asterix and CCDC47). The MPT complex associates with the SEC61 complex. Interacts with NDUFS3, NDUFA4, NDUFV1, NDUFA9 and NDUFS8 of the mitochondrial membrane respiratory chain NADH dehydrogenase (Complex I). Interacts with UQCRC2 of the ubiquinol-cytochrome c reductase complex (Complex III). Interacts with COX5A and COX7C of the cytochrome c oxidase complex (Complex IV). In terms of tissue distribution, expressed in neuronal cells.

It localises to the endoplasmic reticulum membrane. It is found in the mitochondrion inner membrane. Component of the multi-pass translocon (MPT) complex that mediates insertion of multi-pass membrane proteins into the lipid bilayer of membranes. The MPT complex takes over after the SEC61 complex: following membrane insertion of the first few transmembrane segments of proteins by the SEC61 complex, the MPT complex occludes the lateral gate of the SEC61 complex to promote insertion of subsequent transmembrane regions. Within the MPT complex, the GEL subcomplex may mediate insertion of transmembrane regions into the membrane. In addition to its role in multi-pass membrane insertion, RAB5IF/OPTI also acts as an assembly factor for mitochondrial respiratory complexes. This is GEL complex subunit OPTI from Mus musculus (Mouse).